We begin with the raw amino-acid sequence, 221 residues long: MDSGKDTNGYERVWETNCGAMNSGLIMWVISGSGSFSDHYERDPTGGITFTVTNPGTSKRVITVGAFASRPLDTQSFYNAGRIAYFSSRGPTRNGRIKPNIVAGGYFICSTNSEFSSHSDPYICAEGHYYVPFAGTSMATAVVMGLVALYLQDHSFAIPEEVKEWFSSNAVEDDNFLYPNVVYCSEKAVYVLETRFKGSGKTSEQKLRRVTFSYRLAEMGL.

The 189-residue stretch at 1-189 (MDSGKDTNGY…NVVYCSEKAV (189 aa)) folds into the Peptidase S8 domain.

This sequence belongs to the peptidase S8 family.

This is an uncharacterized protein from Aquifex aeolicus (strain VF5).